Here is a 23-residue protein sequence, read N- to C-terminus: SV40 early leader protein (23 aa).

Residues 1–23 (MQRPRPPRPLSYSRSSEEAFLEA) are disordered.

The protein belongs to the polyomavirus early leader protein family.

Its function is as follows. May play a role in the lytic cycle. This chain is SV40 early leader protein, found in Macaca (macaques).